Here is a 521-residue protein sequence, read N- to C-terminus: Ribonuclease Y (521 aa).

A helical membrane pass occupies residues 3-23; that stretch reads VSIWMLVITVLAAVAAYFAGS. The 61-residue stretch at 211-271 folds into the KH domain; it reads TVSVVPLPSD…VRREVARMSL (61 aa). Residues 337-430 enclose the HD domain; sequence IYQHSLEVAF…VQAADALSGA (94 aa).

This sequence belongs to the RNase Y family.

The protein localises to the cell membrane. Endoribonuclease that initiates mRNA decay. This is Ribonuclease Y from Pelobacter propionicus (strain DSM 2379 / NBRC 103807 / OttBd1).